Consider the following 3391-residue polypeptide: MNNQRKKARSTPFNMLKRERNRVSTVQQLTKRFSLGMLQGRGPLKLFMALVAFLRFLTIPPTAGILKRWGTIKKSKAINVLRGFRKEIGRMLNILNRRRRTAGVIIMLIPTAMAFHLTTRNGEPHMIVGRQEKGKSLLFKTEDGVNMCTLMAIDLGELCEDTITYKCPLLRQNEPEDIDCWCNSTSTWVTYGTCATTGEHRREKRSVALVPHVGMGLETRTETWMSSEGAWKHVQRIETWILRHPGFTIMAAILAYTIGTTHFQRALIFILLTAVAPSMTMRCIGISNRDFVEGVSGGSWVDIVLEHGSCVTTMAKNKPTLDFELIKTEAKQPATLRKYCIEAKLTNTTTESRCPTQGEPSLNEEQDKRFLCKHSMVDRGWGNGCGLFGKGGIVTCAMFTCKKNMEGKVVLPENLEYTIVITPHSGEEHAVGNDTGKHGKEIKITPQSSITEAELTGYGTVTMECSPRTGLDFNEMVLLQMEDKAWLVHRQWFLDLPLPWLPGADTQGSNWIQKETLVTFKNPHAKKQDVVVLGSQEGAMHTALTGATEIQMSSGNLLFTGHLKCRLRMDKLQLKGMSYSMCTGKFKIVKEIAETQHGTIVIRVQYEGDGSPCKIPFEIMDLEKRHVLGRLITVNPIVTEKDSPVNIEAEPPFGDSYIIIGVEPGQLKLNWFKKGSSIGQMFETTMRGAKRMAILGDTAWDFGSLGGVFTSIGKALHQVFGAIYGAAFSGVSWTMKILIGVIITWIGMNSRSTSLSVSLVLVGVVTLYLGAMVQADSGCVVSWKNKELKCGSGIFITDNVHTWTEQYKFQPESPSKLASAIQKAHEEGICGIRSVTRLENLMWKQITPELNHILSENEVKLTIMTGDIKGIMQAGKRSLRPQPTELKYSWKTWGKAKMLSTESHNQTFLIDGPETAECPNTNRAWNSLEVEDYGFGVFTTNIWLKLREKQDVFCDSKLMSAAIKDNRAVHADMGYWIESALNDTWKMEKASFIEVKSCHWPKSHTLWSNGVLESEMIIPKNFAGPVSQHNYRPGYHTQTAGPWHLGKLEMDFDFCEGTTVVVTEDCGNRGPSLRTTTASGKLITEWCCRSCTLPPLRYRGEDGCWYGMEIRPLKEKEENLVNSLVTAGHGQIDNFSLGVLGMALFLEEMLRTRVGTKHAILLVAVSFVTLITGNMSFRDLGRVMVMVGATMTDDIGMGVTYLALLAAFKVRPTFAAGLLLRKLTSKELMMATIGIALLSQSTIPETILELTDALALGMMVLKIVRNMEKYQLAVTIMAILCVPNAVILQNAWKVSCTILAAVSVSPLLLTSSQQKADWIPLALTIKGLNPTAIFLTTLSRTSKKRSWPLNEAIMAVGMVSILASSLLKNDIPMTGPLVAGGLLTVCYVLTGRSADLELERAADVKWEDQAEISGSSPILSITISEDGSMSIKNEEEEQTLTILIRTGLLVISGVFPVSIPITAAAWYLWEVKKQRAGVLWDVPSPPPVGKAELEDGAYRIKQRGILGYSQIGAGVYKEGTFHTMWHVTRGAVLMHKGKRIEPSWADVKKDLISYGGGWKLEGEWKEGEEVQVLALEPGKNPRAVQTKPGLFKTNTGTIGAVSLDFSPGTSGSPIVDRKGKVVGLYGNGVVTRSGAYVSAIAQTEKSIEDNPEIEDDIFRKKRLTIMDLHPGAGKTKRYLPAIVREAIKRGLRTLILAPTRVVAAEMEEALRGLPIRYQTPAIRAEHTGREIVDLMCHATFTMRLLSPVRVPNYNLIIMDEAHFTDPASIAARGYISTRVEMGEAAGIFMTATPPGSRDPFPQSNAPIMDEEREIPERSWNSGHEWVTDFKGKTVWFVPSIKAGNDIAACLRKNGKKVIQLSRKTFDSEYVKTRANDWDFVVTTDISEMGANFKAERVIDPRRCMKPVILTDGEERVILAGPMPVTHSSAAQRRGRIGRNPKNENDQYIYMGEPLENDEDCAHWKEAKMLLDNINTPEGIIPSMFEPEREKVDAIDGEYRLRGEARKTFVDLMRRGDLPVWLAYRVAAEGINYADRRWCFDGIKNNQILEENVEVEIWTKEGERKKLKPRWLDARIYSDPLALKEFKEFAAGRKSLTLNLITEMGRLPTFMTQKARDALDNLAVLHTAEAGGRAYNHALSELPETLETLLLLTLLATVTGGIFLFLMSGKGIGKMTLGMCCIITASILLWYAQIQPHWIAASIILEFFLIVLLIPEPEKQRTPQDNQLTYVVIAILTVVAATMANEMGFLEKTKKDLGLGSITTQESESNILDIDLRPASAWTLYAVATTFVTPMLRHSIENSSVNVSLTAIANQATVLMGLGKGWPLSKIHIGVPLLAIGCYSQVNPITLTAALLLLVAHYAIIGPGLQAKATREAQKRAAAGIMKNPTVDGITVIDLDPIPYDPKFEKQLGQVMLLILCVTQVLMMRTTWALCEALTLATGPISTLWEGNPGRFWNTTIAVSMANIFRGSYLAGAGLLFSIMKNTTNTRRGTGNIGETLGEKWKSRLNALGKSEFQIYKKSGIQEVDRTLAKEGIKRGETDHHAVSRGSAKLRWFVERNMVTPEGKVVDLGCGRGGWSYYCGGLKNVREVKGLTKGGPGHEEPIPMSTYGWNLVRLQSGVDVFFTPPEKCDTLLCDIGESSPNPTIEAGRTLRVLNLVENWLNNNTQFCIKVLNPYMPSVIEKMETLQRKYGGALVRNPLSRNSTHEMYWVSNASGNIVSSVNMISRMLINRFTMKHKKATYETDVDLGSGTRNIGIESEIPNLDIIGKRIEKIKQEHETSWHYDQDHPYKTWAYHGSYETKQTGSASSMVNGVVRLLTKPWDVVPMVTQMAMTDTTPFGQQRVFKEKVDTRTQEPKEGTKKLMKITAEWLWKELGKKKTPRMCTREEFTRKVRSNAALGAIFTDENKWKSAREAVEDSRFWELVDRERNLHLEGKCETCVYNMMGKREKKLGEFGKAKGSRAIWYMWLGARFLEFEALGFLNEDHWFSRGNSLSGVEGEGLHKLGYILRDVSKKEGGAMYADDTAGWDTRITLEDLKNEEMVTNHMEGEHKKLAEAIFKLTYQNKVVRVQRPTPRGTVMDIISRRDQRGSGQVGTYGLNTFTNMEAQLIRQMEGEGIFKSIQHLTVTEEIAVQNWLARVGRERLSRMAISGDDCVVKPLDDRFASALTALNDMGKVRKDIQQWEPSRGWNDWTQVPFCSHHFHELVMKDGRVLVVPCRNQDELIGRARISQGAGWSLKETACLGKSYAQMWTLMYFHRRDLRLAANAICSAVPSHWVPTSRTTWSIHAKHEWMTTEDMLAVWNRVWIQENPWMEDKTPVESWEEVPYLGKREDQWCGSLIGLTSRATWAKNIQTAINQVRSLIGNEEYTDYMPSMKRFRREEEEAGVLW.

Residues 1-15 (MNNQRKKARSTPFNM) are interaction with host EXOC1. Residues 1–101 (MNNQRKKARS…LNILNRRRRT (101 aa)) are Cytoplasmic-facing. Residues 37 to 72 (MLQGRGPLKLFMALVAFLRFLTIPPTAGILKRWGTI) are hydrophobic; homodimerization of capsid protein C. Positions 101–114 (TAGVIIMLIPTAMA) are cleaved as a propeptide — ER anchor for the capsid protein C, removed in mature form by serine protease NS3. A helical membrane pass occupies residues 102 to 119 (AGVIIMLIPTAMAFHLTT). At 120-241 (RNGEPHMIVG…KHVQRIETWI (122 aa)) the chain is on the extracellular side. Asparagine 183 is a glycosylation site (N-linked (GlcNAc...) asparagine; by host). The chain crosses the membrane as a helical span at residues 242-259 (LRHPGFTIMAAILAYTIG). Over 260–265 (TTHFQR) the chain is Cytoplasmic. Residues 266–280 (ALIFILLTAVAPSMT) traverse the membrane as a helical segment. Topologically, residues 281–725 (MRCIGISNRD…LHQVFGAIYG (445 aa)) are extracellular. Cystine bridges form between cysteine 283/cysteine 310, cysteine 340/cysteine 401, cysteine 354/cysteine 385, and cysteine 372/cysteine 396. Residue asparagine 347 is glycosylated (N-linked (GlcNAc...) asparagine; by host). The interval 378–391 (DRGWGNGCGLFGKG) is fusion peptide. Asparagine 433 carries N-linked (GlcNAc...) asparagine; by host glycosylation. Intrachain disulfides connect cysteine 465-cysteine 565 and cysteine 582-cysteine 613. The helical transmembrane segment at 726-746 (AAFSGVSWTMKILIGVIITWI) threads the bilayer. At 747 to 752 (GMNSRS) the chain is on the cytoplasmic side. The helical transmembrane segment at 753–773 (TSLSVSLVLVGVVTLYLGAMV) threads the bilayer. At 774–1195 (QADSGCVVSW…MVGATMTDDI (422 aa)) the chain is on the extracellular side. Intrachain disulfides connect cysteine 779/cysteine 790, cysteine 830/cysteine 918, cysteine 954/cysteine 998, cysteine 1055/cysteine 1104, cysteine 1066/cysteine 1088, and cysteine 1087/cysteine 1091. Residues asparagine 905 and asparagine 982 are each glycosylated (N-linked (GlcNAc...) asparagine; by host). N-linked (GlcNAc...) asparagine; by host glycosylation occurs at asparagine 1134. The helical transmembrane segment at 1196-1220 (GMGVTYLALLAAFKVRPTFAAGLLL) threads the bilayer. Residues 1221-1226 (RKLTSK) lie on the Cytoplasmic side of the membrane. Residues 1227-1245 (ELMMATIGIALLSQSTIPE) traverse the membrane as a helical segment. Residues 1246 to 1269 (TILELTDALALGMMVLKIVRNMEK) lie on the Lumenal side of the membrane. A helical transmembrane segment spans residues 1270–1290 (YQLAVTIMAILCVPNAVILQN). A topological domain (cytoplasmic) is located at residue alanine 1291. Residues 1292 to 1310 (WKVSCTILAAVSVSPLLLT) traverse the membrane as a helical segment. The Lumenal portion of the chain corresponds to 1311-1317 (SSQQKAD). A helical transmembrane segment spans residues 1318–1338 (WIPLALTIKGLNPTAIFLTTL). The Cytoplasmic portion of the chain corresponds to 1339 to 1346 (SRTSKKRS). Residues 1347 to 1367 (WPLNEAIMAVGMVSILASSLL) form a helical membrane-spanning segment. Topologically, residues 1368 to 1370 (KND) are lumenal. A helical membrane pass occupies residues 1371–1391 (IPMTGPLVAGGLLTVCYVLTG). Over 1392–1447 (RSADLELERAADVKWEDQAEISGSSPILSITISEDGSMSIKNEEEEQTLTILIRTG) the chain is Cytoplasmic. The interval 1398-1437 (LERAADVKWEDQAEISGSSPILSITISEDGSMSIKNEEEE) is interacts with and activates NS3 protease. The helical intramembrane region spans 1448–1468 (LLVISGVFPVSIPITAAAWYL). Topologically, residues 1469–2147 (WEVKKQRAGV…LSELPETLET (679 aa)) are cytoplasmic. Residues 1476 to 1653 (AGVLWDVPSP…EKSIEDNPEI (178 aa)) enclose the Peptidase S7 domain. Residues histidine 1526, aspartate 1550, and serine 1610 each act as charge relay system; for serine protease NS3 activity in the active site. Residues 1655 to 1811 (DDIFRKKRLT…QSNAPIMDEE (157 aa)) enclose the Helicase ATP-binding domain. Residues 1659-1662 (RKKR) are important for RNA-binding. Residue 1668–1675 (LHPGAGKT) coordinates ATP. A DEAH box motif is present at residues 1759 to 1762 (DEAH). The 168-residue stretch at 1821–1988 (SGHEWVTDFK…IIPSMFEPER (168 aa)) folds into the Helicase C-terminal domain. At lysine 1863 the chain carries N6-acetyllysine; by host. A helical membrane pass occupies residues 2148–2168 (LLLLTLLATVTGGIFLFLMSG). The Lumenal portion of the chain corresponds to 2169–2170 (KG). Positions 2171–2191 (IGKMTLGMCCIITASILLWYA) form an intramembrane region, helical. A topological domain (lumenal) is located at residue glutamine 2192. The chain crosses the membrane as a helical span at residues 2193-2213 (IQPHWIAASIILEFFLIVLLI). Over 2214 to 2228 (PEPEKQRTPQDNQLT) the chain is Cytoplasmic. A helical transmembrane segment spans residues 2229 to 2249 (YVVIAILTVVAATMANEMGFL). Residues 2250–2274 (EKTKKDLGLGSITTQESESNILDID) lie on the Lumenal side of the membrane. An intramembrane region (helical) is located at residues 2275 to 2295 (LRPASAWTLYAVATTFVTPML). Residues 2296–2316 (RHSIENSSVNVSLTAIANQAT) lie on the Lumenal side of the membrane. N-linked (GlcNAc...) asparagine; by host glycans are attached at residues asparagine 2301 and asparagine 2305. The segment at residues 2317–2337 (VLMGLGKGWPLSKIHIGVPLL) is an intramembrane region (helical). Topologically, residues 2338–2347 (AIGCYSQVNP) are lumenal. Residues 2348–2368 (ITLTAALLLLVAHYAIIGPGL) traverse the membrane as a helical segment. Residues 2369 to 2413 (QAKATREAQKRAAAGIMKNPTVDGITVIDLDPIPYDPKFEKQLGQ) are Cytoplasmic-facing. A helical membrane pass occupies residues 2414–2434 (VMLLILCVTQVLMMRTTWALC). Residues 2435 to 2459 (EALTLATGPISTLWEGNPGRFWNTT) are Lumenal-facing. Asparagine 2457 is a glycosylation site (N-linked (GlcNAc...) asparagine; by host). A helical transmembrane segment spans residues 2460–2480 (IAVSMANIFRGSYLAGAGLLF). The Cytoplasmic segment spans residues 2481-3391 (SIMKNTTNTR…REEEEAGVLW (911 aa)). One can recognise an mRNA cap 0-1 NS5-type MT domain in the interval 2493–2755 (TGNIGETLGE…DVDLGSGTRN (263 aa)). Serine 2547 contacts S-adenosyl-L-methionine. Serine 2547 carries the phosphoserine modification. Lysine 2552 functions as the For 2'-O-MTase activity in the catalytic mechanism. The SUMO-interacting motif motif lies at 2568–2571 (VVDL). Glycine 2577, tryptophan 2578, threonine 2595, lysine 2596, aspartate 2622, and valine 2623 together coordinate S-adenosyl-L-methionine. The active-site For 2'-O-MTase activity is aspartate 2637. Isoleucine 2638 provides a ligand contact to S-adenosyl-L-methionine. Catalysis depends on for 2'-O-MTase activity residues lysine 2672 and glutamate 2708. Tyrosine 2710 contributes to the S-adenosyl-L-methionine binding site. The Zn(2+) site is built by glutamate 2929, histidine 2933, cysteine 2938, and cysteine 2941. Residues 3020-3169 (AMYADDTAGW…PLDDRFASAL (150 aa)) form the RdRp catalytic domain. Zn(2+) contacts are provided by histidine 3203, cysteine 3219, and cysteine 3338.

In the N-terminal section; belongs to the class I-like SAM-binding methyltransferase superfamily. mRNA cap 0-1 NS5-type methyltransferase family. As to quaternary structure, homodimer. Interacts (via N-terminus) with host EXOC1 (via C-terminus); this interaction results in EXOC1 degradation through the proteasome degradation pathway. Forms heterodimers with envelope protein E in the endoplasmic reticulum and Golgi. In terms of assembly, homodimer; in the endoplasmic reticulum and Golgi. Interacts with protein prM. Interacts with non-structural protein 1. As to quaternary structure, homodimer; Homohexamer when secreted. Interacts with envelope protein E. Interacts with host PRKAA1. Interacts (via N-terminus) with serine protease NS3. In terms of assembly, forms a heterodimer with serine protease NS3. May form homooligomers. As to quaternary structure, forms a heterodimer with NS2B. Interacts with NS4B. Interacts with unphosphorylated RNA-directed RNA polymerase NS5; this interaction stimulates RNA-directed RNA polymerase NS5 guanylyltransferase activity. Interacts with host SHFL. Interacts with host MAVS; this interaction inhibits the synthesis of IFN-beta. Interacts with host SHFL. Interacts with host AUP1; the interaction occurs in the presence of Dengue virus NS4B and induces lipophagy which facilitates production of virus progeny particles. May interact with host SRPRA and SEC61G. In terms of assembly, interacts with serine protease NS3. As to quaternary structure, homodimer. Interacts with host STAT2; this interaction inhibits the phosphorylation of the latter, and, when all viral proteins are present (polyprotein), targets STAT2 for degradation. Interacts with serine protease NS3. Interacts with host PAF1 complex; the interaction may prevent the recruitment of the PAF1 complex to interferon-responsive genes, and thus reduces the immune response. Post-translationally, specific enzymatic cleavages in vivo yield mature proteins. Cleavages in the lumen of endoplasmic reticulum are performed by host signal peptidase, whereas cleavages in the cytoplasmic side are performed by serine protease NS3. Signal cleavage at the 2K-4B site requires a prior NS3 protease-mediated cleavage at the 4A-2K site. In terms of processing, cleaved in post-Golgi vesicles by a host furin, releasing the mature small envelope protein M, and peptide pr. This cleavage is incomplete as up to 30% of viral particles still carry uncleaved prM. N-glycosylated. Post-translationally, N-glycosylated. The excreted form is glycosylated and this is required for efficient secretion of the protein from infected cells. In terms of processing, acetylated by host KAT5. Acetylation modulates NS3 RNA-binding and unwinding activities and plays an important positive role for viral replication. Sumoylation of RNA-directed RNA polymerase NS5 increases NS5 protein stability allowing proper viral RNA replication. Post-translationally, phosphorylated on serines residues. This phosphorylation may trigger NS5 nuclear localization.

Its subcellular location is the virion. It is found in the host nucleus. The protein resides in the host cytoplasm. The protein localises to the host perinuclear region. It localises to the secreted. Its subcellular location is the virion membrane. It is found in the host endoplasmic reticulum membrane. The protein resides in the host mitochondrion. It carries out the reaction Selective hydrolysis of -Xaa-Xaa-|-Yaa- bonds in which each of the Xaa can be either Arg or Lys and Yaa can be either Ser or Ala.. The catalysed reaction is RNA(n) + a ribonucleoside 5'-triphosphate = RNA(n+1) + diphosphate. It catalyses the reaction a ribonucleoside 5'-triphosphate + H2O = a ribonucleoside 5'-diphosphate + phosphate + H(+). The enzyme catalyses ATP + H2O = ADP + phosphate + H(+). It carries out the reaction a 5'-end (5'-triphosphoguanosine)-ribonucleoside in mRNA + S-adenosyl-L-methionine = a 5'-end (N(7)-methyl 5'-triphosphoguanosine)-ribonucleoside in mRNA + S-adenosyl-L-homocysteine. The catalysed reaction is a 5'-end (N(7)-methyl 5'-triphosphoguanosine)-ribonucleoside in mRNA + S-adenosyl-L-methionine = a 5'-end (N(7)-methyl 5'-triphosphoguanosine)-(2'-O-methyl-ribonucleoside) in mRNA + S-adenosyl-L-homocysteine + H(+). Its function is as follows. Plays a role in virus budding by binding to the cell membrane and gathering the viral RNA into a nucleocapsid that forms the core of a mature virus particle. During virus entry, may induce genome penetration into the host cytoplasm after hemifusion induced by the surface proteins. Can migrate to the cell nucleus where it modulates host functions. Overcomes the anti-viral effects of host EXOC1 by sequestering and degrading the latter through the proteasome degradation pathway. Functionally, inhibits RNA silencing by interfering with host Dicer. Prevents premature fusion activity of envelope proteins in trans-Golgi by binding to envelope protein E at pH6.0. After virion release in extracellular space, gets dissociated from E dimers. In terms of biological role, acts as a chaperone for envelope protein E during intracellular virion assembly by masking and inactivating envelope protein E fusion peptide. prM is the only viral peptide matured by host furin in the trans-Golgi network probably to avoid catastrophic activation of the viral fusion activity in acidic Golgi compartment prior to virion release. prM-E cleavage is inefficient, and many virions are only partially matured. These uncleaved prM would play a role in immune evasion. Its function is as follows. May play a role in virus budding. Exerts cytotoxic effects by activating a mitochondrial apoptotic pathway through M ectodomain. May display a viroporin activity. Functionally, binds to host cell surface receptor and mediates fusion between viral and cellular membranes. Envelope protein is synthesized in the endoplasmic reticulum in the form of heterodimer with protein prM. They play a role in virion budding in the ER, and the newly formed immature particle is covered with 60 spikes composed of heterodimer between precursor prM and envelope protein E. The virion is transported to the Golgi apparatus where the low pH causes dissociation of PrM-E heterodimers and formation of E homodimers. prM-E cleavage is inefficient, and many virions are only partially matured. These uncleaved prM would play a role in immune evasion. Involved in immune evasion, pathogenesis and viral replication. Once cleaved off the polyprotein, is targeted to three destinations: the viral replication cycle, the plasma membrane and the extracellular compartment. Essential for viral replication. Required for formation of the replication complex and recruitment of other non-structural proteins to the ER-derived membrane structures. Excreted as a hexameric lipoparticle that plays a role against host immune response. Antagonizing the complement function. Binds to the host macrophages and dendritic cells. Inhibits signal transduction originating from Toll-like receptor 3 (TLR3). In terms of biological role, involved in immune evasion, pathogenesis and viral replication. Once cleaved off the polyprotein, is targeted to three destinations: the viral replication cycle, the plasma membrane and the extracellular compartment. Essential for viral replication. Required for formation of the replication complex and recruitment of other non-structural proteins to the ER-derived membrane structures. Excreted as a hexameric lipoparticle that plays a role against host immune response. Antagonizing the complement function. Binds to the host macrophages and dendritic cells. Inhibits signal transduction originating from Toll-like receptor 3 (TLR3). Mediates complement activation, which may contribute to the pathogenesis of the vascular leakage that occurs in severe dengue disease. Activates autophagy through the AMPK/ERK/mTOR signaling pathway. Mechanistically, acts as the assembly platform for STK11-AMPK interactions and promotes STK11-AMPK interactions. In turn, promotes phosphorylation of the AMPK kinase structural domain and activates AMPK, thereby positively regulating the AMPK/ERK/mTOR signaling pathway and inducing autophagy. Its function is as follows. Component of the viral RNA replication complex that functions in virion assembly and antagonizes the host immune response. Functionally, required cofactor for the serine protease function of NS3. May have membrane-destabilizing activity and form viroporins. Displays three enzymatic activities: serine protease, NTPase and RNA helicase. NS3 serine protease, in association with NS2B, performs its autocleavage and cleaves the polyprotein at dibasic sites in the cytoplasm: C-prM, NS2A-NS2B, NS2B-NS3, NS3-NS4A, NS4A-2K and NS4B-NS5. NS3 RNA helicase binds RNA and unwinds dsRNA in the 3' to 5' direction. In terms of biological role, regulates the ATPase activity of the NS3 helicase activity. NS4A allows NS3 helicase to conserve energy during unwinding. Plays a role in the inhibition of the host innate immune response. Interacts with host MAVS and thereby prevents the interaction between RIGI and MAVS. In turn, IFN-beta production is impaired. Interacts with host AUP1 which mediates induction of lipophagy in host cells and facilitates production of virus progeny particles. Its function is as follows. Functions as a signal peptide for NS4B and is required for the interferon antagonism activity of the latter. Functionally, induces the formation of ER-derived membrane vesicles where the viral replication takes place. Inhibits interferon (IFN)-induced host STAT1 phosphorylation and nuclear translocation, thereby preventing the establishment of cellular antiviral state by blocking the IFN-alpha/beta pathway. Replicates the viral (+) and (-) RNA genome, and performs the capping of genomes in the cytoplasm. NS5 methylates viral RNA cap at guanine N-7 and ribose 2'-O positions. Besides its role in RNA genome replication, also prevents the establishment of cellular antiviral state by blocking the interferon-alpha/beta (IFN-alpha/beta) signaling pathway. Inhibits host TYK2 and STAT2 phosphorylation, thereby preventing activation of JAK-STAT signaling pathway. May reduce immune responses by preventing the recruitment of the host PAF1 complex to interferon-responsive genes. This Dengue virus type 2 (strain Jamaica/1409/1983) (DENV-2) protein is Genome polyprotein.